The primary structure comprises 299 residues: ATP phosphoribosyltransferase (299 aa).

This sequence belongs to the ATP phosphoribosyltransferase family. Long subfamily. In terms of assembly, equilibrium between an active dimeric form, an inactive hexameric form and higher aggregates. Interconversion between the various forms is largely reversible and is influenced by the natural substrates and inhibitors of the enzyme. Mg(2+) is required as a cofactor.

The protein resides in the cytoplasm. The enzyme catalyses 1-(5-phospho-beta-D-ribosyl)-ATP + diphosphate = 5-phospho-alpha-D-ribose 1-diphosphate + ATP. It functions in the pathway amino-acid biosynthesis; L-histidine biosynthesis; L-histidine from 5-phospho-alpha-D-ribose 1-diphosphate: step 1/9. Its activity is regulated as follows. Feedback inhibited by histidine. Its function is as follows. Catalyzes the condensation of ATP and 5-phosphoribose 1-diphosphate to form N'-(5'-phosphoribosyl)-ATP (PR-ATP). Has a crucial role in the pathway because the rate of histidine biosynthesis seems to be controlled primarily by regulation of HisG enzymatic activity. In Escherichia coli O8 (strain IAI1), this protein is ATP phosphoribosyltransferase.